A 607-amino-acid polypeptide reads, in one-letter code: Probable CoA ligase CCL8 (607 aa).

ATP is bound by residues 236 to 244, 391 to 396, Asp474, 486 to 489, and Lys591; these read TSGTTGKPK, ERYGMT, and ILGR. Residues 305–391 form an SBD1 region; that stretch reads SVRGIWQRWR…QTITGHRLLE (87 aa). The tract at residues 392 to 453 is SBD2; sequence RYGMTEFVMA…VRSPSLFKEY (62 aa).

It belongs to the ATP-dependent AMP-binding enzyme family. As to expression, mostly expressed at low levels in glandular trichomes (lupulin glands) after flowering, and, to a lower extent, in stems, leaves, flowers and cones.

Its subcellular location is the cytoplasm. It localises to the cytosol. This is Probable CoA ligase CCL8 from Humulus lupulus (European hop).